A 299-amino-acid chain; its full sequence is Bifunctional protein FolD 2 (299 aa).

NADP(+) is bound by residues 168–170, Ser193, and Ile234; that span reads GRS.

The protein belongs to the tetrahydrofolate dehydrogenase/cyclohydrolase family. Homodimer.

The catalysed reaction is (6R)-5,10-methylene-5,6,7,8-tetrahydrofolate + NADP(+) = (6R)-5,10-methenyltetrahydrofolate + NADPH. The enzyme catalyses (6R)-5,10-methenyltetrahydrofolate + H2O = (6R)-10-formyltetrahydrofolate + H(+). It functions in the pathway one-carbon metabolism; tetrahydrofolate interconversion. Its function is as follows. Catalyzes the oxidation of 5,10-methylenetetrahydrofolate to 5,10-methenyltetrahydrofolate and then the hydrolysis of 5,10-methenyltetrahydrofolate to 10-formyltetrahydrofolate. This chain is Bifunctional protein FolD 2, found in Rhizobium meliloti (strain 1021) (Ensifer meliloti).